We begin with the raw amino-acid sequence, 360 residues long: Uroporphyrinogen decarboxylase (360 aa).

Substrate is bound by residues 31-35 (RQAGR), Asp81, Tyr157, Thr212, and His333.

It belongs to the uroporphyrinogen decarboxylase family. Homodimer.

The protein localises to the cytoplasm. The catalysed reaction is uroporphyrinogen III + 4 H(+) = coproporphyrinogen III + 4 CO2. Its pathway is porphyrin-containing compound metabolism; protoporphyrin-IX biosynthesis; coproporphyrinogen-III from 5-aminolevulinate: step 4/4. Functionally, catalyzes the decarboxylation of four acetate groups of uroporphyrinogen-III to yield coproporphyrinogen-III. The chain is Uroporphyrinogen decarboxylase from Janthinobacterium sp. (strain Marseille) (Minibacterium massiliensis).